The following is a 397-amino-acid chain: Potassium channel subfamily K member 4 (397 aa).

The Cytoplasmic segment spans residues 1–3 (MRS). The helical transmembrane segment at 4 to 24 (TTLLALLALVLLYLVSGALVF) threads the bilayer. The Extracellular portion of the chain corresponds to 25-88 (QALEQPHEQQ…WTNSSNHSSA (64 aa)). N81 is a glycosylation site (N-linked (GlcNAc...) asparagine). An intramembrane region (helical) is located at residues 89–103 (WNLGSAFFFSGTIIT). Residues T104, I105, G106, and Y107 each coordinate K(+). The tract at residues 104–109 (TIGYGN) is selectivity filter 1. The stretch at 104 to 110 (TIGYGNI) is an intramembrane region. Residues 111-118 (ALHTDAGR) lie on the Extracellular side of the membrane. The chain crosses the membrane as a helical span at residues 119-151 (LFCIFYALVGIPLFGMLLAGVGDRLGSSLRRGI). Topologically, residues 152–173 (GHIEAVFLKWHVPPGLVRMLSA) are cytoplasmic. A helical membrane pass occupies residues 174–195 (VLFLLIGCLLFVLTPTFVFSYM). Residues 196–200 (ESWSK) lie on the Extracellular side of the membrane. The segment at residues 201 to 214 (LEAIYFVIVTLTTV) is an intramembrane region (helical). K(+)-binding residues include T213, V214, G215, and F216. The segment at 213–218 (TVGFGD) is selectivity filter 2. The stretch at 215–220 (GFGDYV) is an intramembrane region. Residues 221–234 (PGDGTGQNSPAYQP) lie on the Extracellular side of the membrane. A helical transmembrane segment spans residues 235–261 (LVWFWILFGLAYFASVLTTIGNWLRAV). The Cytoplasmic segment spans residues 262-397 (SRRTRAEMGG…GRLRDKAVPV (136 aa)). The segment covering 282-292 (TVTARVTQRTG) has biased composition (polar residues). A disordered region spans residues 282–397 (TVTARVTQRT…GRLRDKAVPV (116 aa)). The segment covering 369-388 (PRGRRRPNPTKKPSRPRGPG) has biased composition (basic residues).

It belongs to the two pore domain potassium channel (TC 1.A.1.8) family. As to quaternary structure, homodimer; disulfide-linked. Forms heterodimers with other 2-pore domain K(+) channel subunits, such as KCNK2 and KCNK10. As to expression, detected in brain, and at much lower levels in liver, skeletal muscle and testis.

It localises to the cell membrane. The protein resides in the cell projection. It is found in the axon. It catalyses the reaction K(+)(in) = K(+)(out). The enzyme catalyses Rb(+)(in) = Rb(+)(out). It carries out the reaction Cs(+)(in) = Cs(+)(out). Its activity is regulated as follows. Activated by various stimuli including intracellular basic pH, mechanical stretch and heat and polyunsaturated fatty acids such as arachidonic acid. Functionally, k(+) channel that conducts voltage-dependent outward rectifying currents upon membrane depolarization. Voltage sensing is coupled to K(+) electrochemical gradient in an 'ion flux gating' mode where outward but not inward ion flow opens the gate. Converts to voltage-independent 'leak' conductance mode upon stimulation by various stimuli including mechanical membrane stretch, basic pH, heat and lipids. Homo- and heterodimerizes to form functional channels with distinct regulatory and gating properties. At trigeminal A-beta afferent nerves, the heterodimer of KCNK2/TREK-1 and KCNK4/TRAAK is mostly coexpressed at nodes of Ranvier where it conducts voltage-independent mechanosensitive and thermosensitive currents, allowing rapid action potential repolarization, high speed and high frequence saltatory conduction on myelinated nerves to ensure prompt sensory responses. Permeable to other monovalent cations such as Rb(+) and Cs(+). The sequence is that of Potassium channel subfamily K member 4 from Rattus norvegicus (Rat).